The sequence spans 304 residues: ATP synthase gamma chain (304 aa).

Belongs to the ATPase gamma chain family. In terms of assembly, F-type ATPases have 2 components, CF(1) - the catalytic core - and CF(0) - the membrane proton channel. CF(1) has five subunits: alpha(3), beta(3), gamma(1), delta(1), epsilon(1). CF(0) has three main subunits: a, b and c.

It localises to the cell membrane. Its function is as follows. Produces ATP from ADP in the presence of a proton gradient across the membrane. The gamma chain is believed to be important in regulating ATPase activity and the flow of protons through the CF(0) complex. This Chloroherpeton thalassium (strain ATCC 35110 / GB-78) protein is ATP synthase gamma chain.